The sequence spans 336 residues: Fructose-1,6-bisphosphatase class 1 (336 aa).

Residues E92, D115, L117, and D118 each coordinate Mg(2+). Substrate is bound by residues 118 to 121, N211, Y244, 262 to 264, and K274; these read DGSS and YLY. Mg(2+) is bound at residue E280.

It belongs to the FBPase class 1 family. In terms of assembly, homotetramer. It depends on Mg(2+) as a cofactor.

The protein localises to the cytoplasm. The catalysed reaction is beta-D-fructose 1,6-bisphosphate + H2O = beta-D-fructose 6-phosphate + phosphate. It functions in the pathway carbohydrate biosynthesis; gluconeogenesis. This is Fructose-1,6-bisphosphatase class 1 from Aliivibrio fischeri (strain MJ11) (Vibrio fischeri).